The primary structure comprises 412 residues: Pentatricopeptide repeat-containing protein At3g60980, mitochondrial (412 aa).

A mitochondrion-targeting transit peptide spans 1-18 (MSLIGRLNLGRRFCTAVP). PPR repeat units follow at residues 69–104 (TTTI…NLRP), 105–139 (NSHC…GQVH), 143–178 (SDDS…TTYP), 179–213 (DHVA…FLIA), 230–264 (VAFL…NRLL), 266–296 (CAET…LLDK), 305–339 (DSDT…NDYL), 344–371 (IITR…DFGY), and 373–407 (DVNT…TLKE).

The protein belongs to the PPR family. P subfamily.

It is found in the mitochondrion. This chain is Pentatricopeptide repeat-containing protein At3g60980, mitochondrial, found in Arabidopsis thaliana (Mouse-ear cress).